We begin with the raw amino-acid sequence, 135 residues long: Small ribosomal subunit protein uS8 (135 aa).

Belongs to the universal ribosomal protein uS8 family. In terms of assembly, part of the 30S ribosomal subunit. Contacts proteins S5 and S12.

Its function is as follows. One of the primary rRNA binding proteins, it binds directly to 16S rRNA central domain where it helps coordinate assembly of the platform of the 30S subunit. The polypeptide is Small ribosomal subunit protein uS8 (Parafrankia sp. (strain EAN1pec)).